The chain runs to 408 residues: tRNA(Ile)-lysidine synthase (408 aa).

27-32 is an ATP binding site; sequence SGGGDS.

It belongs to the tRNA(Ile)-lysidine synthase family.

Its subcellular location is the cytoplasm. It catalyses the reaction cytidine(34) in tRNA(Ile2) + L-lysine + ATP = lysidine(34) in tRNA(Ile2) + AMP + diphosphate + H(+). Its function is as follows. Ligates lysine onto the cytidine present at position 34 of the AUA codon-specific tRNA(Ile) that contains the anticodon CAU, in an ATP-dependent manner. Cytidine is converted to lysidine, thus changing the amino acid specificity of the tRNA from methionine to isoleucine. This chain is tRNA(Ile)-lysidine synthase, found in Caulobacter vibrioides (strain ATCC 19089 / CIP 103742 / CB 15) (Caulobacter crescentus).